Here is a 221-residue protein sequence, read N- to C-terminus: Probable lipoprotein CT_734 (221 aa).

Positions 1-24 are cleaved as a signal peptide; sequence MKKFIYKYSFGALLLLSGLSGLSS. C25 carries the N-palmitoyl cysteine lipid modification. C25 is lipidated: S-diacylglycerol cysteine.

This sequence belongs to the chlamydial CPn_0875/CT_734/TC_0107 family.

The protein resides in the cell membrane. The protein is Probable lipoprotein CT_734 of Chlamydia trachomatis serovar D (strain ATCC VR-885 / DSM 19411 / UW-3/Cx).